Consider the following 855-residue polypeptide: RE1-silencing transcription factor (855 aa).

The segment at 141–163 (FFCKPCQYQGENEQEFIVHIRTH) adopts a C2H2-type 1 zinc-finger fold. Positions 172–199 (NGGDSDEDLSADAGPQTSVPNAESAESN) are disordered. Residues 186 to 199 (PQTSVPNAESAESN) show a composition bias toward polar residues. C2H2-type zinc fingers lie at residues 204–226 (IRCE…LKHH), 236–258 (FKCT…LRNH), 264–286 (FTCS…IRTH), 292–314 (FQCI…MRTH), 320–343 (FKCD…RQVH), 349–371 (LSCP…VELH), and 377–400 (FLCP…KSRH). Residues 458–811 (NAVVETEKSS…ETPTEERDAS (354 aa)) are disordered. 3 stretches are compositionally biased toward basic and acidic residues: residues 462-472 (ETEKSSKKNMD), 481-496 (NEKK…EKTA), and 504-535 (AVKD…EKAL). Positions 548–569 (SSVQQQSDDCEQTQHTPQQNET) are enriched in polar residues. Residues 570-580 (QENRPEKENRS) are compositionally biased toward basic and acidic residues. The span at 594 to 604 (QTKKPCKKQTK) shows a compositional bias: basic residues. The segment covering 628-638 (RKAENPAEPKQ) has biased composition (basic and acidic residues). Positions 639-648 (RIKRTKKKKD) are enriched in basic residues. A compositionally biased stretch (polar residues) spans 652–662 (PTTSEANQTNP). Composition is skewed to basic and acidic residues over residues 711–721 (PAVEDVQRPLE) and 799–811 (KLPE…RDAS). A C2H2-type 9 zinc finger spans residues 818-840 (HTCIFCDRSFALEMDYRKHLNRH).

It localises to the nucleus. It is found in the cytoplasm. Functionally, transcriptional repressor which binds neuron-restrictive silencer element (NRSE) and represses neuronal gene transcription in non-neuronal cells. In Danio rerio (Zebrafish), this protein is RE1-silencing transcription factor (rest).